The chain runs to 129 residues: Small ribosomal subunit protein uS13 (129 aa).

Residues 95–114 (NLPVRGQRTKTNARTRRGPR) are compositionally biased toward basic residues. The tract at residues 95–129 (NLPVRGQRTKTNARTRRGPRKTVAGRGQKRGATKK) is disordered.

This sequence belongs to the universal ribosomal protein uS13 family. In terms of assembly, part of the 30S ribosomal subunit. Forms a loose heterodimer with protein S19. Forms two bridges to the 50S subunit in the 70S ribosome.

Located at the top of the head of the 30S subunit, it contacts several helices of the 16S rRNA. In the 70S ribosome it contacts the 23S rRNA (bridge B1a) and protein L5 of the 50S subunit (bridge B1b), connecting the 2 subunits; these bridges are implicated in subunit movement. Contacts the tRNAs in the A and P-sites. The polypeptide is Small ribosomal subunit protein uS13 (Dehalococcoides mccartyi (strain ATCC BAA-2100 / JCM 16839 / KCTC 5957 / BAV1)).